The sequence spans 282 residues: MTDETTQNIKDKTEEELAALLDQTLGEFTATPAPKPRTTDDELDELMASADQEAAQKAAKDFQKMLEQMVTLQEEAMKKAGADPSEGEGEQPLDPNDPEALAMMDALKQLMECSSNVANASNPEEFMAGLDMLRSPNSPMEPFMSMIMQTLASKEVMYPPLKEIFDNYPKYLEDNGAGLDAETKERYEKQFEVLGKICTEFEKQPELAEVQPVDAATQPAPEADPASIEHFEKLGKLLVELQQYGYPPKELVGALPDGWQIDESGLPKVADAAAATEACSIM.

The interval 73–95 (QEEAMKKAGADPSEGEGEQPLDP) is disordered. Position 279 is a cysteine methyl ester (cysteine 279). Residue cysteine 279 is the site of S-farnesyl cysteine attachment. A propeptide spans 280-282 (SIM) (removed in mature form).

It belongs to the peroxin-19 family.

It localises to the peroxisome. This is Putative peroxisomal biogenesis factor 19 (prx-19) from Caenorhabditis elegans.